Here is a 366-residue protein sequence, read N- to C-terminus: 1-aminocyclopropane-1-carboxylate oxidase homolog 12 (366 aa).

A Fe2OG dioxygenase domain is found at 215 to 314 (KTLLMICHYY…RISVASFFSS (100 aa)). Residues H239, D241, and H295 each contribute to the Fe cation site. 2-oxoglutarate is bound at residue R305.

It belongs to the iron/ascorbate-dependent oxidoreductase family. Fe(2+) is required as a cofactor.

The protein is 1-aminocyclopropane-1-carboxylate oxidase homolog 12 of Arabidopsis thaliana (Mouse-ear cress).